Reading from the N-terminus, the 305-residue chain is Ribosomal RNA large subunit methyltransferase F (305 aa).

Belongs to the methyltransferase superfamily. METTL16/RlmF family.

It localises to the cytoplasm. It catalyses the reaction adenosine(1618) in 23S rRNA + S-adenosyl-L-methionine = N(6)-methyladenosine(1618) in 23S rRNA + S-adenosyl-L-homocysteine + H(+). Specifically methylates the adenine in position 1618 of 23S rRNA. This chain is Ribosomal RNA large subunit methyltransferase F, found in Enterobacter sp. (strain 638).